A 262-amino-acid chain; its full sequence is Phosphonates import ATP-binding protein PhnC 3 (262 aa).

In terms of domain architecture, ABC transporter spans 3 to 245; it reads IQLECLSVTY…ELNRIYGNAE (243 aa). 36–43 is an ATP binding site; that stretch reads GASGSGKS.

This sequence belongs to the ABC transporter superfamily. Phosphonates importer (TC 3.A.1.9.1) family. As to quaternary structure, the complex is composed of two ATP-binding proteins (PhnC), two transmembrane proteins (PhnE) and a solute-binding protein (PhnD).

The protein localises to the cell inner membrane. It carries out the reaction phosphonate(out) + ATP + H2O = phosphonate(in) + ADP + phosphate + H(+). In terms of biological role, part of the ABC transporter complex PhnCDE involved in phosphonates import. Responsible for energy coupling to the transport system. The sequence is that of Phosphonates import ATP-binding protein PhnC 3 from Nostoc sp. (strain PCC 7120 / SAG 25.82 / UTEX 2576).